We begin with the raw amino-acid sequence, 94 residues long: Citrate lyase acyl carrier protein (94 aa).

The residue at position 14 (Ser14) is an O-(phosphoribosyl dephospho-coenzyme A)serine.

Belongs to the CitD family. In terms of assembly, oligomer with a subunit composition of (alpha,beta,gamma)6.

Its subcellular location is the cytoplasm. Covalent carrier of the coenzyme of citrate lyase. The protein is Citrate lyase acyl carrier protein of Halothermothrix orenii (strain H 168 / OCM 544 / DSM 9562).